The sequence spans 300 residues: D-alanine--D-alanine ligase (300 aa).

The ATP-grasp domain maps to 99–293 (KKILKYANIN…FAELLNSIVK (195 aa)). 126-181 (IEKIGYPVFVKPNSGGSSVATNLVKNKEGIKEAVELALKYDKEVMIENYTKGEEIT) contributes to the ATP binding site. Positions 248, 260, and 262 each coordinate Mg(2+).

This sequence belongs to the D-alanine--D-alanine ligase family. Requires Mg(2+) as cofactor. Mn(2+) is required as a cofactor.

It is found in the cytoplasm. The catalysed reaction is 2 D-alanine + ATP = D-alanyl-D-alanine + ADP + phosphate + H(+). It participates in cell wall biogenesis; peptidoglycan biosynthesis. Functionally, cell wall formation. The sequence is that of D-alanine--D-alanine ligase from Clostridium botulinum (strain Loch Maree / Type A3).